A 696-amino-acid polypeptide reads, in one-letter code: Gametogenetin-binding protein 2 (696 aa).

Position 360 is a phosphoserine (Ser-360).

In terms of assembly, interacts with GGN.

It localises to the cytoplasmic vesicle. Functionally, may be involved in spermatogenesis. This chain is Gametogenetin-binding protein 2 (Ggnbp2), found in Rattus norvegicus (Rat).